The following is a 133-amino-acid chain: Putative biopolymer transport protein ExbD-like 1 (133 aa).

Over 1–15 (MNYDNYWDEDKPELN) the chain is Cytoplasmic. Residues 16–32 (ITPLVDVMLVLLAILMV) form a helical membrane-spanning segment. The Periplasmic segment spans residues 33–133 (TTPTLTYKEE…FLKVSLITSP (101 aa)).

It belongs to the ExbD/TolR family.

The protein localises to the cell inner membrane. This is Putative biopolymer transport protein ExbD-like 1 from Helicobacter pylori (strain J99 / ATCC 700824) (Campylobacter pylori J99).